The primary structure comprises 237 residues: Chalcone--flavanone isomerase 1 (237 aa).

The substrate site is built by T48, N113, and S190.

The protein belongs to the chalcone isomerase family.

The enzyme catalyses a chalcone = a flavanone.. It participates in secondary metabolite biosynthesis; flavonoid biosynthesis. In terms of biological role, catalyzes the intramolecular cyclization of bicyclic chalcones into tricyclic (S)-flavanones. Responsible for the isomerization of 4,2',4',6'-tetrahydroxychalcone (also termed chalcone) into naringenin. The protein is Chalcone--flavanone isomerase 1 (CHI1) of Fragaria ananassa (Strawberry).